Reading from the N-terminus, the 583-residue chain is Isocitrate dehydrogenase kinase/phosphatase (583 aa).

Residues 315–321 (APGIRGM) and lysine 336 each bind ATP. Aspartate 371 is an active-site residue.

This sequence belongs to the AceK family.

It localises to the cytoplasm. The enzyme catalyses L-seryl-[isocitrate dehydrogenase] + ATP = O-phospho-L-seryl-[isocitrate dehydrogenase] + ADP + H(+). In terms of biological role, bifunctional enzyme which can phosphorylate or dephosphorylate isocitrate dehydrogenase (IDH) on a specific serine residue. This is a regulatory mechanism which enables bacteria to bypass the Krebs cycle via the glyoxylate shunt in response to the source of carbon. When bacteria are grown on glucose, IDH is fully active and unphosphorylated, but when grown on acetate or ethanol, the activity of IDH declines drastically concomitant with its phosphorylation. In Salmonella dublin (strain CT_02021853), this protein is Isocitrate dehydrogenase kinase/phosphatase.